Reading from the N-terminus, the 366-residue chain is Ferrochelatase (366 aa).

Residues His-210 and Glu-293 each contribute to the Fe cation site.

Belongs to the ferrochelatase family.

It localises to the cytoplasm. It carries out the reaction heme b + 2 H(+) = protoporphyrin IX + Fe(2+). The protein operates within porphyrin-containing compound metabolism; protoheme biosynthesis; protoheme from protoporphyrin-IX: step 1/1. Catalyzes the ferrous insertion into protoporphyrin IX. The chain is Ferrochelatase from Leptospira borgpetersenii serovar Hardjo-bovis (strain L550).